A 146-amino-acid polypeptide reads, in one-letter code: MSTTTEVIAHHWAFAVFFVVAIGLCCLMLMGAFFLGGRARARAKHTPFESGIDSVGTARMRLSAKFYLVAMFFVIFDVEALYLYAWSVSIRESGWVGFIEAAIFILVLLAGLVYLVRIGALDWTPVRSRRQSKPGTIKNATNSHPQ.

3 helical membrane passes run 14 to 34 (FAVF…GAFF), 66 to 86 (FYLV…LYAW), and 96 to 116 (VGFI…VYLV).

It belongs to the complex I subunit 3 family. In terms of assembly, NDH-1 is composed of 13 different subunits. Subunits NuoA, H, J, K, L, M, N constitute the membrane sector of the complex.

Its subcellular location is the cell inner membrane. It carries out the reaction a quinone + NADH + 5 H(+)(in) = a quinol + NAD(+) + 4 H(+)(out). Functionally, NDH-1 shuttles electrons from NADH, via FMN and iron-sulfur (Fe-S) centers, to quinones in the respiratory chain. The immediate electron acceptor for the enzyme in this species is believed to be ubiquinone. Couples the redox reaction to proton translocation (for every two electrons transferred, four hydrogen ions are translocated across the cytoplasmic membrane), and thus conserves the redox energy in a proton gradient. In Serratia proteamaculans (strain 568), this protein is NADH-quinone oxidoreductase subunit A.